Here is a 149-residue protein sequence, read N- to C-terminus: Histidine-containing phosphotransfer protein 2 (149 aa).

Positions 39-144 (TPGFVSEVVT…LQLEQQIQAY (106 aa)) constitute an HPt domain. The residue at position 80 (His-80) is a Phosphohistidine.

Post-translationally, two-component system major event consists of a His-to-Asp phosphorelay between a sensor histidine kinase (HK) and a response regulator (RR). In plants, the His-to-Asp phosphorelay involves an additional intermediate named Histidine-containing phosphotransfer protein (HPt). This multistep phosphorelay consists of a His-Asp-His-Asp sequential transfer of a phosphate group between first a His and an Asp of the HK protein, followed by the transfer to a conserved His of the HPt protein and finally the transfer to an Asp in the receiver domain of the RR protein. As to expression, widely expressed.

The protein resides in the cytoplasm. It localises to the cytosol. It is found in the nucleus. In terms of biological role, functions as a two-component phosphorelay mediators between cytokinin sensor histidine kinases and response regulators (B-type ARRs). Plays an important role in propagating cytokinin signal transduction through the multistep His-to-Asp phosphorelay. Functions as a positive regulator of the cytokinin signaling pathway. May play a regulatory role in salt and drought tolerance during plant development. This is Histidine-containing phosphotransfer protein 2 from Oryza sativa subsp. japonica (Rice).